We begin with the raw amino-acid sequence, 209 residues long: High frequency lysogenization protein HflD homolog (209 aa).

The stretch at 95–132 (LERKLAASKGAMNTLGNRIADLSRQLEHFELESDTLMS) forms a coiled coil.

Belongs to the HflD family.

Its subcellular location is the cytoplasm. The protein resides in the cell inner membrane. The sequence is that of High frequency lysogenization protein HflD homolog from Cronobacter sakazakii (strain ATCC BAA-894) (Enterobacter sakazakii).